The following is an 861-amino-acid chain: Glucans biosynthesis glucosyltransferase H (861 aa).

Transmembrane regions (helical) follow at residues 142 to 162 (FILLLLMLAQTSVATYYMKGI), 188 to 208 (VLPYVIQFGILALFAILFCWV), 516 to 536 (VFLTGVMSYLSAPLWFFFLVL), 573 to 593 (LFSTTLTLLFLPKLLSVMLIW), 600 to 620 (FGGVIRVTLSMLLEMFFSVLL), and 683 to 703 (FLWWLSPIVGSLILSIPVSVI).

The protein belongs to the glycosyltransferase 2 family. OpgH subfamily.

The protein localises to the cell inner membrane. The protein operates within glycan metabolism; osmoregulated periplasmic glucan (OPG) biosynthesis. Its function is as follows. Involved in the biosynthesis of osmoregulated periplasmic glucans (OPGs). The sequence is that of Glucans biosynthesis glucosyltransferase H from Pseudomonas aeruginosa (strain LESB58).